The chain runs to 158 residues: Transcription elongation factor GreA (158 aa).

Positions 49 to 73 (QAAREQQGFIEGRIKEIEAKLANAQ) form a coiled coil.

Belongs to the GreA/GreB family.

In terms of biological role, necessary for efficient RNA polymerase transcription elongation past template-encoded arresting sites. The arresting sites in DNA have the property of trapping a certain fraction of elongating RNA polymerases that pass through, resulting in locked ternary complexes. Cleavage of the nascent transcript by cleavage factors such as GreA or GreB allows the resumption of elongation from the new 3'terminus. GreA releases sequences of 2 to 3 nucleotides. This chain is Transcription elongation factor GreA, found in Methylococcus capsulatus (strain ATCC 33009 / NCIMB 11132 / Bath).